Consider the following 712-residue polypeptide: Lactoperoxidase (712 aa).

An N-terminal signal peptide occupies residues 1–22 (MWVCLQLPVFLASVTLFEVAAS). Residues 23–100 (DTIAQAASTT…WEESLKRLRR (78 aa)) constitute a propeptide that is removed on maturation. Asn-106 is a glycosylation site (N-linked (GlcNAc...) asparagine). Intrachain disulfides connect Cys-123–Cys-284, Cys-132–Cys-145, Cys-246–Cys-256, and Cys-250–Cys-274. A glycan (N-linked (GlcNAc...) asparagine) is linked at Asn-212. Asp-225 provides a ligand contact to heme b. Catalysis depends on His-226, which acts as the Proton acceptor. Residue Asp-227 coordinates Ca(2+). 4 residues coordinate Ca(2+): Thr-301, Phe-303, Asp-305, and Ser-307. At Ser-315 the chain carries Phosphoserine. Residues Asn-322 and Asn-358 are each glycosylated (N-linked (GlcNAc...) asparagine). A disulfide bridge connects residues Cys-354 and Cys-365. Glu-375 is a binding site for heme b. Asn-449 carries an N-linked (GlcNAc...) asparagine glycan. Residue His-468 coordinates heme b. Position 482 is a 3'-nitrotyrosine (Tyr-482). 2 disulfides stabilise this stretch: Cys-573–Cys-630 and Cys-671–Cys-696.

It belongs to the peroxidase family. XPO subfamily. Ca(2+) is required as a cofactor. It depends on heme b as a cofactor. As to expression, mammary gland; milk.

Its subcellular location is the secreted. It localises to the cytoplasm. The enzyme catalyses 2 a phenolic donor + H2O2 = 2 a phenolic radical donor + 2 H2O. It catalyses the reaction thiocyanate + H2O2 + H(+) = hypothiocyanous acid + H2O. The catalysed reaction is iodide + H2O2 = hypoiodite + H2O. Heme-containing oxidoreductase which catalyzes the conversion of thiocyanate (SCN(-)) into antimicrobial agent hypothiocyanous acid (OSCN(-)) in the presence of hydrogen peroxide (H2O2). Also involved in the conversion of iodide (I(-)) into hypoiodite (IO(-)) in the presence of H2O2. Responsible for the inactivation of a wide range of micro-organisms and hence, important component of defense mechanism. The lactoperoxidase-SCN(-)-H2O2 system shows antibacterial properties against some streptococci strains. The lactoperoxidase-I(-)-H2O2 system shows antibacterial properties against E.coli. May protect the udder from infection and may promote growth in newborns. May be implicated in airway host defense against infection. May contribute to maintaining an appropriate H2O2 cellular level, therefore protecting cells from H2O2-caused injuries and inflammation. The polypeptide is Lactoperoxidase (LPO) (Bos taurus (Bovine)).